The primary structure comprises 110 residues: UPF0060 membrane protein Bpet0062 (110 aa).

Helical transmembrane passes span 7 to 27 (LGLF…PYLW), 33 to 53 (SAWL…LLTL), 63 to 83 (AAYG…VDGV), and 86 to 106 (ATTD…IMAG).

Belongs to the UPF0060 family.

The protein resides in the cell inner membrane. In Bordetella petrii (strain ATCC BAA-461 / DSM 12804 / CCUG 43448), this protein is UPF0060 membrane protein Bpet0062.